A 341-amino-acid polypeptide reads, in one-letter code: N-acetyl-gamma-glutamyl-phosphate reductase (341 aa).

The active site involves Cys-145.

The protein belongs to the NAGSA dehydrogenase family. Type 1 subfamily.

The protein localises to the cytoplasm. The catalysed reaction is N-acetyl-L-glutamate 5-semialdehyde + phosphate + NADP(+) = N-acetyl-L-glutamyl 5-phosphate + NADPH + H(+). The protein operates within amino-acid biosynthesis; L-arginine biosynthesis; N(2)-acetyl-L-ornithine from L-glutamate: step 3/4. Catalyzes the NADPH-dependent reduction of N-acetyl-5-glutamyl phosphate to yield N-acetyl-L-glutamate 5-semialdehyde. This Methanothrix thermoacetophila (strain DSM 6194 / JCM 14653 / NBRC 101360 / PT) (Methanosaeta thermophila) protein is N-acetyl-gamma-glutamyl-phosphate reductase.